We begin with the raw amino-acid sequence, 428 residues long: Glutamate-1-semialdehyde 2,1-aminomutase 1 (428 aa).

Lys268 carries the N6-(pyridoxal phosphate)lysine modification.

Belongs to the class-III pyridoxal-phosphate-dependent aminotransferase family. HemL subfamily. In terms of assembly, homodimer. It depends on pyridoxal 5'-phosphate as a cofactor.

The protein resides in the cytoplasm. The enzyme catalyses (S)-4-amino-5-oxopentanoate = 5-aminolevulinate. It functions in the pathway porphyrin-containing compound metabolism; protoporphyrin-IX biosynthesis; 5-aminolevulinate from L-glutamyl-tRNA(Glu): step 2/2. The chain is Glutamate-1-semialdehyde 2,1-aminomutase 1 from Geobacillus kaustophilus (strain HTA426).